The sequence spans 131 residues: Holo-[acyl-carrier-protein] synthase (131 aa).

Asp-8 and Glu-63 together coordinate Mg(2+).

The protein belongs to the P-Pant transferase superfamily. AcpS family. It depends on Mg(2+) as a cofactor.

It is found in the cytoplasm. It catalyses the reaction apo-[ACP] + CoA = holo-[ACP] + adenosine 3',5'-bisphosphate + H(+). Functionally, transfers the 4'-phosphopantetheine moiety from coenzyme A to a Ser of acyl-carrier-protein. The protein is Holo-[acyl-carrier-protein] synthase of Shewanella halifaxensis (strain HAW-EB4).